The chain runs to 445 residues: Flagellum-associated coiled-coil domain-containing protein 1 (445 aa).

The segment at 26-47 is disordered; sequence PQLPRKNSTGSSKLTPLVPAPK. A compositionally biased stretch (polar residues) spans 30–39; it reads RKNSTGSSKL. 2 coiled-coil regions span residues 122-226 and 283-315; these read SRTN…TYQD and AVFENFIQEKEELLKQHQSDTLQLEELRKTKEV. Lys376 carries the N6-acetyllysine modification. Residues 387-414 are a coiled coil; it reads EKYKHTIQILTEENIHLKQKIISKNEEI.

Its subcellular location is the cytoplasm. The protein localises to the cytoplasmic granule. It is found in the cell projection. The protein resides in the cilium. It localises to the flagellum. The polypeptide is Flagellum-associated coiled-coil domain-containing protein 1 (Homo sapiens (Human)).